We begin with the raw amino-acid sequence, 393 residues long: 2,3,4,5-tetrahydropyridine-2,6-dicarboxylate N-succinyltransferase (393 aa).

E261 (acyl-anhydride intermediate) is an active-site residue. Succinyl-CoA contacts are provided by residues R263, G278, S281, A304, 319 to 320, G327, K356, and 369 to 372; these read DA and RQDS.

The protein belongs to the type 2 tetrahydrodipicolinate N-succinyltransferase family. As to quaternary structure, homotrimer.

Its subcellular location is the cytoplasm. It carries out the reaction (S)-2,3,4,5-tetrahydrodipicolinate + succinyl-CoA + H2O = (S)-2-succinylamino-6-oxoheptanedioate + CoA. Its pathway is amino-acid biosynthesis; L-lysine biosynthesis via DAP pathway; LL-2,6-diaminopimelate from (S)-tetrahydrodipicolinate (succinylase route): step 1/3. In terms of biological role, catalyzes the conversion of the cyclic tetrahydrodipicolinate (THDP) into the acyclic N-succinyl-L-2-amino-6-oxopimelate using succinyl-CoA. In Nitratiruptor sp. (strain SB155-2), this protein is 2,3,4,5-tetrahydropyridine-2,6-dicarboxylate N-succinyltransferase.